The following is a 503-amino-acid chain: Maturase K (503 aa).

The protein belongs to the intron maturase 2 family. MatK subfamily.

The protein resides in the plastid. Its subcellular location is the chloroplast. Functionally, usually encoded in the trnK tRNA gene intron. Probably assists in splicing its own and other chloroplast group II introns. The protein is Maturase K of Rosa californica (California wild rose).